The chain runs to 570 residues: Urease subunit alpha (570 aa).

The Urease domain maps to 131-570; that stretch reads GGFDSHIHFI…LPMAQRYFMY (440 aa). Ni(2+) is bound by residues histidine 136, histidine 138, and lysine 219. At lysine 219 the chain carries N6-carboxylysine. Residue histidine 221 coordinates substrate. Residues histidine 248 and histidine 274 each coordinate Ni(2+). Catalysis depends on histidine 322, which acts as the Proton donor. Aspartate 362 contacts Ni(2+).

The protein belongs to the metallo-dependent hydrolases superfamily. Urease alpha subunit family. Heterotrimer of UreA (gamma), UreB (beta) and UreC (alpha) subunits. Three heterotrimers associate to form the active enzyme. The cofactor is Ni cation. Post-translationally, carboxylation allows a single lysine to coordinate two nickel ions.

The protein resides in the cytoplasm. The catalysed reaction is urea + 2 H2O + H(+) = hydrogencarbonate + 2 NH4(+). Its pathway is nitrogen metabolism; urea degradation; CO(2) and NH(3) from urea (urease route): step 1/1. The chain is Urease subunit alpha from Rhodopseudomonas palustris (strain HaA2).